A 239-amino-acid polypeptide reads, in one-letter code: DNA repair protein RecO (239 aa).

It belongs to the RecO family.

In terms of biological role, involved in DNA repair and RecF pathway recombination. The chain is DNA repair protein RecO from Stenotrophomonas maltophilia (strain R551-3).